We begin with the raw amino-acid sequence, 161 residues long: Large ribosomal subunit protein uL16 (161 aa).

The protein belongs to the universal ribosomal protein uL16 family.

This chain is Large ribosomal subunit protein uL16, found in Methanosphaera stadtmanae (strain ATCC 43021 / DSM 3091 / JCM 11832 / MCB-3).